The chain runs to 795 residues: Phenylalanine--tRNA ligase beta subunit (795 aa).

One can recognise a tRNA-binding domain in the interval 39–148; the sequence is AGAFHGVVVG…ADAPLGTDIR (110 aa). Positions 401 to 476 constitute a B5 domain; it reads PARATIALRR…RVYGYNNIPN (76 aa). Positions 454, 460, 463, and 464 each coordinate Mg(2+). The region spanning 701–794 is the FDX-ACB domain; the sequence is SRFPANRRDI…LKQRFQASLR (94 aa).

It belongs to the phenylalanyl-tRNA synthetase beta subunit family. Type 1 subfamily. As to quaternary structure, tetramer of two alpha and two beta subunits. It depends on Mg(2+) as a cofactor.

It is found in the cytoplasm. The catalysed reaction is tRNA(Phe) + L-phenylalanine + ATP = L-phenylalanyl-tRNA(Phe) + AMP + diphosphate + H(+). This is Phenylalanine--tRNA ligase beta subunit (pheT) from Dickeya dadantii (strain 3937) (Erwinia chrysanthemi (strain 3937)).